A 441-amino-acid chain; its full sequence is Interferon-related developmental regulator 2 (441 aa).

The segment covering 1–15 (MPRARKGNTPRKGGQ) has biased composition (basic residues). The tract at residues 1–72 (MPRARKGNTP…TVDEQGPQED (72 aa)) is disordered. Acidic residues predominate over residues 63 to 72 (TVDEQGPQED).

The protein belongs to the IFRD family. As to quaternary structure, associates with ribosomes; promoting ribosome inactivation.

In terms of biological role, ribosome-binding protein that acts as an inhibitor of mRNA translation by promoting ribosome inactivation. Associates with the P- and E-sites of the ribosome and inserts a C-terminal helix into the mRNA exit channel to preclude translation. The protein is Interferon-related developmental regulator 2 of Oryctolagus cuniculus (Rabbit).